Consider the following 1277-residue polypeptide: Membrane-associated guanylate kinase, WW and PDZ domain-containing protein 2 (1277 aa).

In terms of domain architecture, PDZ spans 17–101 (ESVIGRNPEG…PLRLKCVKQG (85 aa)). One can recognise a Guanylate kinase-like domain in the interval 109–283 (RHYLNLRFQK…APVYSQPEEL (175 aa)). Positions 205-308 (PGATPSAEGK…EDSDPLPDNW (104 aa)) are disordered. Positions 281–296 (EELKDQMDDTKSTKPE) are enriched in basic and acidic residues. WW domains lie at 302–335 (DPLP…DPRL) and 348–381 (NELP…NPVL). The interval 302 to 381 (DPLPDNWEMA…RRTQFENPVL (80 aa)) is interaction with DDN. Phosphotyrosine is present on Tyr362. In terms of domain architecture, PDZ 1 spans 426 to 510 (STTLKKSNMG…SVNLVLCRGY (85 aa)). The disordered stretch occupies residues 556-575 (QSVPDITDRPPHSLHSMPAD). The region spanning 605–683 (TLTIVKGAKG…ETSLIIHRGG (79 aa)) is the PDZ 2 domain. Residue Ser686 is modified to Phosphoserine. The region spanning 778 to 860 (DVHLRRMESG…NGQVNLTVRR (83 aa)) is the PDZ 3 domain. Tyr827 carries the post-translational modification Phosphotyrosine. The disordered stretch occupies residues 869–913 (CPENGRSPGSVSTHHSSPRSDYATYANSNHAAPSNNASPPEGFAS). Phosphoserine occurs at positions 884 and 885. The segment covering 894-908 (ANSNHAAPSNNASPP) has biased composition (low complexity). In terms of domain architecture, PDZ 4 spans 920–1010 (DVIIHRKENE…SVTLRIIPQE (91 aa)). Residues 1011 to 1042 (ELNNPTSAPSSEKQSPMAQQHSPLAQQHSPLA) are compositionally biased toward polar residues. Residues 1011–1130 (ELNNPTSAPS…PDTRQYPLSD (120 aa)) are disordered. The span at 1069-1085 (NSYRSEVKARQDVKPDI) shows a compositional bias: basic and acidic residues. One can recognise a PDZ 5 domain in the interval 1141–1223 (TVDMEKGAKG…RVRLLLKRGT (83 aa)).

The protein belongs to the MAGUK family. Interacts (via its WW domains) with DRPLA. Interacts with CTNNB1, ACVR2A, SMAD2 and SMAD3. Part of a complex consisting of MAGI2/ARIP1, ACVR2A, ACVR1B and SMAD3. May interact with HTR2A and IGSF9. Interacts with HTR4. Interacts (via guanylate kinase domain) with DLGAP1. Interacts (via PDZ domains) with GRIN2A, GRID2 and NLGN1. Interacts with CTNND2. Interacts with MAGUIN-1. Interacts (via its second PDZ domain) with PTEN (via unphosphorylated C-terminus); this interaction diminishes the degradation rate of PTEN. Found in a complex, at least composed of KIDINS220, MAGI2, NTRK1 and RAPGEF2; the complex is mainly formed at late endosomes in a NGF-dependent manner. Interacts with RAPGEF2; the interaction occurs before or after nerve growth factor (NGF) stimulation. Isoform 1 interacts (via PDZ domain) with KIDINS220 isoform 2 (via C-terminal domain). Interacts with DDN. Identified in a complex with ACTN4, CASK, IQGAP1, NPHS1, SPTAN1 and SPTBN1. Interacts with DLL1. Found in a complex with IGSF9B and NLGN2; the interaction with IGSF9B is mediated via the PDZ 5 and PDZ 6 domains, while the interaction with NLGN2 is mediated via the WW1, WW2 and PDZ2 domains. Interacts (via PDZ 6 domain) with USH1G (via SAM domain); the interaction is triggered by phosphorylation of USH1G by CK2 and negatively regulates MAGI2-mediated endocytosis. In terms of tissue distribution, expressed in the foot process layer of podocytes of the kidney glomeruli but not in tubules (at protein level). Expressed in the brain.

The protein localises to the cytoplasm. The protein resides in the late endosome. Its subcellular location is the synapse. It is found in the synaptosome. It localises to the cell membrane. The protein localises to the cytoskeleton. The protein resides in the microtubule organizing center. Its subcellular location is the centrosome. It is found in the cell projection. It localises to the cilium. The protein localises to the centriole. The protein resides in the photoreceptor inner segment. Its subcellular location is the photoreceptor outer segment. Seems to act as scaffold molecule at synaptic junctions by assembling neurotransmitter receptors and cell adhesion proteins. Plays a role in nerve growth factor (NGF)-induced recruitment of RAPGEF2 to late endosomes and neurite outgrowth. May play a role in regulating activin-mediated signaling in neuronal cells. Enhances the ability of PTEN to suppress AKT1 activation. Plays a role in receptor-mediated clathrin-dependent endocytosis which is required for ciliogenesis. This is Membrane-associated guanylate kinase, WW and PDZ domain-containing protein 2 (Magi2) from Rattus norvegicus (Rat).